The chain runs to 88 residues: Protein ORGAN SIZE RELATED 1 (88 aa).

The organ Size Related (OSR) domain stretch occupies residues 25–76 (ITARSVALLLFLSLLLLILPPFLPPLPPPPATLLLLPLLLMILLIFLAFSPS). 2 consecutive transmembrane segments (helical) span residues 30 to 50 (VALL…LPPL) and 53 to 73 (PPAT…FLAF).

It belongs to the plant organ size related (OSR) protein family. In terms of tissue distribution, mostly expressed in flowers, and, to a lower extent, in leaves and cotyledons.

It is found in the membrane. Its subcellular location is the endoplasmic reticulum. The protein resides in the nucleus. The protein localises to the cytoplasm. Its function is as follows. Together with ARGOS and ARL, regulates organ growth and final organ size. Promotes both cell expansion and proliferation-dependent organ growth, in an ANT-dependent manner. This is Protein ORGAN SIZE RELATED 1 from Arabidopsis thaliana (Mouse-ear cress).